We begin with the raw amino-acid sequence, 301 residues long: Sulfate adenylyltransferase subunit 2 2 (301 aa).

Belongs to the PAPS reductase family. CysD subfamily. Heterodimer composed of CysD, the smaller subunit, and CysN.

The catalysed reaction is sulfate + ATP + H(+) = adenosine 5'-phosphosulfate + diphosphate. It functions in the pathway sulfur metabolism; hydrogen sulfide biosynthesis; sulfite from sulfate: step 1/3. In terms of biological role, with CysN forms the ATP sulfurylase (ATPS) that catalyzes the adenylation of sulfate producing adenosine 5'-phosphosulfate (APS) and diphosphate, the first enzymatic step in sulfur assimilation pathway. APS synthesis involves the formation of a high-energy phosphoric-sulfuric acid anhydride bond driven by GTP hydrolysis by CysN coupled to ATP hydrolysis by CysD. The protein is Sulfate adenylyltransferase subunit 2 2 of Shewanella sediminis (strain HAW-EB3).